The chain runs to 86 residues: Large ribosomal subunit protein bL27 (86 aa).

A compositionally biased stretch (gly residues) spans 1 to 10 (MAQKKGGGST). The tract at residues 1 to 21 (MAQKKGGGSTRNGRDSESKRL) is disordered.

This sequence belongs to the bacterial ribosomal protein bL27 family.

The chain is Large ribosomal subunit protein bL27 from Cupriavidus pinatubonensis (strain JMP 134 / LMG 1197) (Cupriavidus necator (strain JMP 134)).